A 314-amino-acid polypeptide reads, in one-letter code: SERTA domain-containing protein 2 (314 aa).

In terms of domain architecture, SERTA spans 33-80; sequence YTLQRQTIFNISLMKLYNHRPLTEPSLQKTVLINNMLRRIQEELKQEG. Disordered stretches follow at residues 77–119 and 181–222; these read KQEG…HPCD and PTST…SKLM. A compositionally biased stretch (polar residues) spans 87–97; the sequence is TPSSQPTTEPS. Positions 182–193 are enriched in low complexity; the sequence is TSTSTEAATAAT. A compositionally biased stretch (basic and acidic residues) spans 210-221; sequence GPQESRADDSKL. The required for transactivation activity stretch occupies residues 235–311; it reads TGFLTDLTLD…TELDHIMEVL (77 aa). Positions 238-243 match the Nuclear export signal (NES) motif; the sequence is LTDLTL.

In terms of assembly, interacts with XPO1; which mediates nuclear export. Interacts with TFDP1; modulates transactivation activity of TFDP1/E2F complexes. In terms of processing, polyubiquitinated, which promotes proteasomal degradation. In terms of tissue distribution, expressed in adipose tissue.

It is found in the nucleus. Its subcellular location is the cytoplasm. Acts at E2F-responsive promoters as coregulator to integrate signals provided by PHD- and/or bromodomain-containing transcription factors. May act as coactivator as well as corepressor of E2F1-TFDP1 and E2F4-TFDP1 complexes on E2F consensus binding sites, which would activate or inhibit E2F-target genes expression. Modulates fat storage by down-regulating the expression of key genes involved in adipocyte lipolysis, thermogenesis and oxidative metabolism. This is SERTA domain-containing protein 2 (SERTAD2) from Homo sapiens (Human).